Reading from the N-terminus, the 332-residue chain is Invasin IpaD (332 aa).

Over residues 1 to 25 the composition is skewed to low complexity; that stretch reads MNITTLTNSISTSSFSPNNTNGSST. Residues 1-43 are disordered; it reads MNITTLTNSISTSSFSPNNTNGSSTETVNSDIKTTTSSHPVSS. Positions 26–43 are enriched in polar residues; the sequence is ETVNSDIKTTTSSHPVSS. The stretch at 44-77 forms a coiled coil; sequence LTMLNDTLHNIRTTNQALKKELSQKTLTKTSLEE. The interval 192 to 267 is ipaB binding; sequence VKSLKDALTT…NRLDNLGGNG (76 aa).

Belongs to the invasin protein D family.

It localises to the secreted. Its function is as follows. Required for bacterial invasion of host cells. Controls IpaB and IpaC secretion, and the efficiency with which they are physically inserted into target cell membranes. These proteins are exported via T3SS to form a pore in the host membrane that allows the translocation of the other effectors into the host cytoplasm. Along with IpaB, is essential for both blocking secretion through the Mxi/Spa translocon in the absence of a secretion-inducing signal, and for controlling the level of secretion in the presence of this signal. In Shigella dysenteriae, this protein is Invasin IpaD (ipaD).